The primary structure comprises 171 residues: Peptidyl-prolyl cis-trans isomerase (171 aa).

The PPIase cyclophilin-type domain occupies 7 to 170 (FFDLTIGGAP…KPVVIADCGQ (164 aa)).

It belongs to the cyclophilin-type PPIase family. In terms of tissue distribution, expressed in leaves, floral buds, growing shoots and stamens at anthesis.

It is found in the cytoplasm. The enzyme catalyses [protein]-peptidylproline (omega=180) = [protein]-peptidylproline (omega=0). With respect to regulation, binds cyclosporin A (CsA). CsA mediates some of its effects via an inhibitory action on PPIase. In terms of biological role, PPIases accelerate the folding of proteins. It catalyzes the cis-trans isomerization of proline imidic peptide bonds in oligopeptides. This is Peptidyl-prolyl cis-trans isomerase from Solanum lycopersicum (Tomato).